A 197-amino-acid polypeptide reads, in one-letter code: Imidazoleglycerol-phosphate dehydratase (197 aa).

This sequence belongs to the imidazoleglycerol-phosphate dehydratase family.

It localises to the cytoplasm. It catalyses the reaction D-erythro-1-(imidazol-4-yl)glycerol 3-phosphate = 3-(imidazol-4-yl)-2-oxopropyl phosphate + H2O. It functions in the pathway amino-acid biosynthesis; L-histidine biosynthesis; L-histidine from 5-phospho-alpha-D-ribose 1-diphosphate: step 6/9. The protein is Imidazoleglycerol-phosphate dehydratase of Syntrophus aciditrophicus (strain SB).